We begin with the raw amino-acid sequence, 230 residues long: Cytidylate kinase (230 aa).

An ATP-binding site is contributed by 12–20 (GPSGAGKGT).

This sequence belongs to the cytidylate kinase family. Type 1 subfamily.

The protein localises to the cytoplasm. The enzyme catalyses CMP + ATP = CDP + ADP. It carries out the reaction dCMP + ATP = dCDP + ADP. The polypeptide is Cytidylate kinase (Shewanella piezotolerans (strain WP3 / JCM 13877)).